Here is a 210-residue protein sequence, read N- to C-terminus: Thymidylate kinase (210 aa).

Residue 10–17 participates in ATP binding; that stretch reads GPEGAGKS.

The protein belongs to the thymidylate kinase family.

It carries out the reaction dTMP + ATP = dTDP + ADP. Its function is as follows. Phosphorylation of dTMP to form dTDP in both de novo and salvage pathways of dTTP synthesis. This Pseudomonas fluorescens (strain SBW25) protein is Thymidylate kinase.